Reading from the N-terminus, the 704-residue chain is Polyribonucleotide nucleotidyltransferase (704 aa).

Positions 488 and 494 each coordinate Mg(2+). Residues 555–614 form the KH domain; the sequence is PRITTLKINPEKIRDVIGKGGATIRALTEETGTTIELEDDGTVKIASANGDATKEAIRRI. The S1 motif domain maps to 624–692; that stretch reads GTIYNGKVVR…RQGRVRLSMK (69 aa).

It belongs to the polyribonucleotide nucleotidyltransferase family. In terms of assembly, component of the RNA degradosome, which is a multiprotein complex involved in RNA processing and mRNA degradation. Mg(2+) serves as cofactor.

It localises to the cytoplasm. The enzyme catalyses RNA(n+1) + phosphate = RNA(n) + a ribonucleoside 5'-diphosphate. Involved in mRNA degradation. Catalyzes the phosphorolysis of single-stranded polyribonucleotides processively in the 3'- to 5'-direction. This Shewanella sediminis (strain HAW-EB3) protein is Polyribonucleotide nucleotidyltransferase.